Reading from the N-terminus, the 243-residue chain is MRHTLFISDLHLEEKTPSITAHFLYFLKHQAPKADAIYILGDFFEAWIGDDNQTPFNRKIIESLQTLARTKPTYFMRGNRDFLIGQRFAAMTGVSLLEDPSVIQLYNKPVLLMHGDSLCTLDHKHQAYRRKIMKPWVQKLMLSLPLSLRRKLAKKFREQSRRHNRTLSYEIKDVTPEEVNRVMKEQNVELLIHGHTHRPAIHDLTINGNPTKRIVLGAWHHGGSVLRYAQDGSFELQAFKIDL.

Mn(2+) contacts are provided by Asp9, His11, Asp42, Asn79, and His114. 79 to 80 contributes to the substrate binding site; the sequence is NR. Residues Asp122, Ser160, Asn164, and His195 each contribute to the substrate site. Mn(2+) contacts are provided by His195 and His197.

The protein belongs to the LpxH family. It depends on Mn(2+) as a cofactor.

Its subcellular location is the cell inner membrane. It catalyses the reaction UDP-2-N,3-O-bis[(3R)-3-hydroxytetradecanoyl]-alpha-D-glucosamine + H2O = 2-N,3-O-bis[(3R)-3-hydroxytetradecanoyl]-alpha-D-glucosaminyl 1-phosphate + UMP + 2 H(+). It participates in glycolipid biosynthesis; lipid IV(A) biosynthesis; lipid IV(A) from (3R)-3-hydroxytetradecanoyl-[acyl-carrier-protein] and UDP-N-acetyl-alpha-D-glucosamine: step 4/6. In terms of biological role, hydrolyzes the pyrophosphate bond of UDP-2,3-diacylglucosamine to yield 2,3-diacylglucosamine 1-phosphate (lipid X) and UMP by catalyzing the attack of water at the alpha-P atom. Involved in the biosynthesis of lipid A, a phosphorylated glycolipid that anchors the lipopolysaccharide to the outer membrane of the cell. This Coxiella burnetii (strain RSA 331 / Henzerling II) protein is UDP-2,3-diacylglucosamine hydrolase.